Here is a 274-residue protein sequence, read N- to C-terminus: 2,3,4,5-tetrahydropyridine-2,6-dicarboxylate N-succinyltransferase (274 aa).

Substrate is bound by residues R104 and D141.

The protein belongs to the transferase hexapeptide repeat family. Homotrimer.

It localises to the cytoplasm. It catalyses the reaction (S)-2,3,4,5-tetrahydrodipicolinate + succinyl-CoA + H2O = (S)-2-succinylamino-6-oxoheptanedioate + CoA. The protein operates within amino-acid biosynthesis; L-lysine biosynthesis via DAP pathway; LL-2,6-diaminopimelate from (S)-tetrahydrodipicolinate (succinylase route): step 1/3. The protein is 2,3,4,5-tetrahydropyridine-2,6-dicarboxylate N-succinyltransferase of Shewanella frigidimarina (strain NCIMB 400).